Reading from the N-terminus, the 314-residue chain is ATP synthase gamma chain (314 aa).

This sequence belongs to the ATPase gamma chain family. As to quaternary structure, F-type ATPases have 2 components, CF(1) - the catalytic core - and CF(0) - the membrane proton channel. CF(1) has five subunits: alpha(3), beta(3), gamma(1), delta(1), epsilon(1). CF(0) has three main subunits: a, b and c.

It is found in the cellular thylakoid membrane. Its function is as follows. Produces ATP from ADP in the presence of a proton gradient across the membrane. The gamma chain is believed to be important in regulating ATPase activity and the flow of protons through the CF(0) complex. The polypeptide is ATP synthase gamma chain (Synechococcus sp. (strain JA-2-3B'a(2-13)) (Cyanobacteria bacterium Yellowstone B-Prime)).